Here is a 784-residue protein sequence, read N- to C-terminus: Serine/threonine-protein kinase DCLK2 (784 aa).

The tract at residues 1 to 45 (MASTRSIELEHFEERDKRPRPGSRRGAPSSSGGSSSSGPKGNGLI) is disordered. A compositionally biased stretch (basic and acidic residues) spans 7-19 (IELEHFEERDKRP). Over residues 24–39 (RRGAPSSSGGSSSSGP) the composition is skewed to low complexity. Position 61 is a phosphothreonine (threonine 61). Doublecortin domains are found at residues 72-158 (KKAR…VDYT) and 197-280 (KLVT…AQDD). 2 stretches are compositionally biased toward low complexity: residues 300 to 312 (AVKY…PGPS) and 341 to 364 (TPSS…SPGS). Residues 300–368 (AVKYSGSKSP…PTSPGSFRGL (69 aa)) are disordered. The residue at position 379 (serine 379) is a Phosphoserine. Positions 411–668 (YKIGKVIGDG…AGEILSHPWV (258 aa)) constitute a Protein kinase domain. Residues 417 to 425 (IGDGNFAVV) and lysine 440 each bind ATP. Aspartate 532 acts as the Proton acceptor in catalysis. A Phosphoserine modification is found at serine 664. Residue threonine 683 is modified to Phosphothreonine. A disordered region spans residues 724–784 (CQDSSRPGME…RAGTWRRHRD (61 aa)). Positions 741-758 (SASAEEPPVSAPAAAPAP) are enriched in low complexity.

Belongs to the protein kinase superfamily. CAMK Ser/Thr protein kinase family. CaMK subfamily. In terms of assembly, binds to and stabilizes microtubules. Interacts with MAPK8IP1/JIP-1, MAPK8IP2/JIP-2, MAPK9/JNK2, PPP1R9B/NEURABIN-2 and actin. Post-translationally, autophosphorylated.

The protein localises to the cytoplasm. Its subcellular location is the cytoskeleton. The enzyme catalyses L-seryl-[protein] + ATP = O-phospho-L-seryl-[protein] + ADP + H(+). It catalyses the reaction L-threonyl-[protein] + ATP = O-phospho-L-threonyl-[protein] + ADP + H(+). Functionally, protein kinase with a significantly reduced Ca(2+)/CAM affinity and dependence compared to other members of the CaMK family. May play a role in the down-regulation of CRE-dependent gene activation probably by phosphorylation of the CREB coactivator CRTC2/TORC2 and the resulting retention of TORC2 in the cytoplasm. This chain is Serine/threonine-protein kinase DCLK2 (DCLK2), found in Ailuropoda melanoleuca (Giant panda).